The following is a 410-amino-acid chain: Dihydrolipoyllysine-residue acetyltransferase component of pyruvate dehydrogenase complex (410 aa).

In terms of domain architecture, Lipoyl-binding spans 1 to 69; it reads MPDIGTDLVE…TTGSLIAILN (69 aa). Position 35 is an N6-lipoyllysine (lysine 35). Residues 81-100 form a disordered region; the sequence is SSSYSFKNSKNTSTNSNLGN. The Peripheral subunit-binding (PSBD) domain maps to 113–150; the sequence is HATPTVRRLARKFDIKLENITGTGRKGRILKEDVISYK. Histidine 383 is an active-site residue.

It belongs to the 2-oxoacid dehydrogenase family. As to quaternary structure, forms a 24-polypeptide structural core with octahedral symmetry. It depends on (R)-lipoate as a cofactor.

It carries out the reaction N(6)-[(R)-dihydrolipoyl]-L-lysyl-[protein] + acetyl-CoA = N(6)-[(R)-S(8)-acetyldihydrolipoyl]-L-lysyl-[protein] + CoA. Functionally, the pyruvate dehydrogenase complex catalyzes the overall conversion of pyruvate to acetyl-CoA and CO(2). It contains multiple copies of three enzymatic components: pyruvate dehydrogenase (E1), dihydrolipoamide acetyltransferase (E2) and lipoamide dehydrogenase (E3). This is Dihydrolipoyllysine-residue acetyltransferase component of pyruvate dehydrogenase complex (aceF) from Buchnera aphidicola subsp. Baizongia pistaciae (strain Bp).